A 121-amino-acid chain; its full sequence is Large ribosomal subunit protein uL14c (121 aa).

It belongs to the universal ribosomal protein uL14 family. Part of the 50S ribosomal subunit.

The protein resides in the plastid. It is found in the chloroplast. In terms of biological role, binds to 23S rRNA. The sequence is that of Large ribosomal subunit protein uL14c from Thalassiosira pseudonana (Marine diatom).